Here is a 213-residue protein sequence, read N- to C-terminus: Adenylate kinase (213 aa).

10-15 is a binding site for ATP; the sequence is GAGKGT. Residues 30-59 are NMP; the sequence is STGDMFRAAMANQTEMGVLAKSYIDKGDLV. AMP is bound by residues Thr31, Arg36, 57-59, 86-89, and Gln93; these read DLV and GYPR. An LID region spans residues 127–160; sequence GRIINKKTGETFHKIFNPPVGDYKEEDFYQREDD. ATP-binding positions include Arg128 and 137–138; that span reads TF. The AMP site is built by Arg157 and Arg168. Lys196 lines the ATP pocket.

The protein belongs to the adenylate kinase family. As to quaternary structure, monomer.

The protein localises to the cytoplasm. It catalyses the reaction AMP + ATP = 2 ADP. It functions in the pathway purine metabolism; AMP biosynthesis via salvage pathway; AMP from ADP: step 1/1. In terms of biological role, catalyzes the reversible transfer of the terminal phosphate group between ATP and AMP. Plays an important role in cellular energy homeostasis and in adenine nucleotide metabolism. The polypeptide is Adenylate kinase (Streptococcus equi subsp. equi (strain 4047)).